A 112-amino-acid polypeptide reads, in one-letter code: Putative pterin-4-alpha-carbinolamine dehydratase (112 aa).

Belongs to the pterin-4-alpha-carbinolamine dehydratase family.

The enzyme catalyses (4aS,6R)-4a-hydroxy-L-erythro-5,6,7,8-tetrahydrobiopterin = (6R)-L-erythro-6,7-dihydrobiopterin + H2O. The chain is Putative pterin-4-alpha-carbinolamine dehydratase from Shewanella loihica (strain ATCC BAA-1088 / PV-4).